The following is a 443-amino-acid chain: Tubulin beta-1/beta-2 chain (443 aa).

The GTP site is built by Gln-11, Glu-69, Ser-138, Gly-142, Thr-143, Gly-144, Asn-204, and Asn-226. Glu-69 contacts Mg(2+). A disordered region spans residues 424 to 443; that stretch reads QYQDASAEEEGEFEGEEEEA. Over residues 429–443 the composition is skewed to acidic residues; sequence SAEEEGEFEGEEEEA.

Belongs to the tubulin family. In terms of assembly, dimer of alpha and beta chains. A typical microtubule is a hollow water-filled tube with an outer diameter of 25 nm and an inner diameter of 15 nM. Alpha-beta heterodimers associate head-to-tail to form protofilaments running lengthwise along the microtubule wall with the beta-tubulin subunit facing the microtubule plus end conferring a structural polarity. Microtubules usually have 13 protofilaments but different protofilament numbers can be found in some organisms and specialized cells. It depends on Mg(2+) as a cofactor.

Its subcellular location is the cytoplasm. The protein resides in the cytoskeleton. Functionally, tubulin is the major constituent of microtubules, a cylinder consisting of laterally associated linear protofilaments composed of alpha- and beta-tubulin heterodimers. Microtubules grow by the addition of GTP-tubulin dimers to the microtubule end, where a stabilizing cap forms. Below the cap, tubulin dimers are in GDP-bound state, owing to GTPase activity of alpha-tubulin. This is Tubulin beta-1/beta-2 chain (TUBB1) from Chlamydomonas reinhardtii (Chlamydomonas smithii).